Here is a 237-residue protein sequence, read N- to C-terminus: Octopine transport system permease protein OccQ (237 aa).

The ABC transmembrane type-1 domain maps to 22–222 (TGMTVAVASS…LITFISGQAF (201 aa)). 4 consecutive transmembrane segments (helical) span residues 24–44 (MTVAVASSAFTIGLVFGCLGA), 72–92 (LVIYLFYFGSSSLISGVGSLF), 96–116 (GFVSAPAFLTGALAIGLVSAA), and 201–221 (FSFYLTAAALYLLITFISGQA).

Belongs to the binding-protein-dependent transport system permease family. HisMQ subfamily.

It localises to the cell inner membrane. In terms of biological role, component of the octopine active transport system probably consisting of four subunits: Q, M, P and T. In Rhizobium meliloti (Ensifer meliloti), this protein is Octopine transport system permease protein OccQ (occQ).